Reading from the N-terminus, the 169-residue chain is MTDTQNRVAMGYIKGVFGIKGWLKIAANTEYSDSLLDYPEWHLVKDGKTVSVTLEAGKVVNSELQVKFEGINDRDLAFSLRGYTIEIPREAFAPTEEDEYYWTDLVGMTVVNKDHTVLGKVSNLMETGANDVLMIDGEHGQILIPFVSQYIETVDTGSKIITADWGLDY.

In terms of domain architecture, PRC barrel spans E97–Y169.

It belongs to the RimM family. As to quaternary structure, binds ribosomal protein uS19.

The protein resides in the cytoplasm. An accessory protein needed during the final step in the assembly of 30S ribosomal subunit, possibly for assembly of the head region. Essential for efficient processing of 16S rRNA. May be needed both before and after RbfA during the maturation of 16S rRNA. It has affinity for free ribosomal 30S subunits but not for 70S ribosomes. The chain is Ribosome maturation factor RimM from Neisseria meningitidis serogroup C / serotype 2a (strain ATCC 700532 / DSM 15464 / FAM18).